The following is a 1915-amino-acid chain: Cysteine repeat modular protein 2 (1915 aa).

The signal sequence occupies residues 1–23 (MKFKKELINILALIFVLKKNIFA). FU repeat units lie at residues 53-98 (LGLC…QTYV), 104-151 (SCIC…GYTQ), 161-208 (QLLC…LQYK), 210-263 (NGIC…GYVV), and 267-315 (TQRC…GNYQ). Asparagine 138 carries an N-linked (GlcNAc...) asparagine glycan. N-linked (GlcNAc...) asparagine glycosylation is found at asparagine 274, asparagine 279, and asparagine 316. FU repeat units follow at residues 317-362 (SSLC…GFYT), 373-422 (QPIC…QTYY), 427-492 (TRSC…GFYQ), 496-546 (NNSC…SQNN), and 554-602 (TQAC…GTYM). Residue asparagine 409 is glycosylated (N-linked (GlcNAc...) asparagine). N-linked (GlcNAc...) asparagine glycosylation is found at asparagine 496, asparagine 572, asparagine 603, and asparagine 621. FU repeat units follow at residues 606 to 639 (TNQCSLCGFGCSSCTNGTFNSCISCLNGYYLQQN), 640 to 686 (YNVC…GFYV), and 690 to 739 (QQAC…NECL). N-linked (GlcNAc...) asparagine glycosylation occurs at asparagine 742. 2 FU repeats span residues 760–814 (DGQC…GFYY) and 818–865 (NKQC…GYYQ). Residues asparagine 909, asparagine 930, asparagine 1051, asparagine 1085, and asparagine 1193 are each glycosylated (N-linked (GlcNAc...) asparagine). In terms of domain architecture, EGF-like spans 1184–1224 (VQIPCDSNINCSGNGKCLWSQDNYNEILCICNINYAGRYCE). 3 disulfides stabilise this stretch: cysteine 1188–cysteine 1200, cysteine 1194–cysteine 1212, and cysteine 1214–cysteine 1223. Residues asparagine 1250, asparagine 1297, asparagine 1519, asparagine 1546, asparagine 1554, asparagine 1580, and asparagine 1596 are each glycosylated (N-linked (GlcNAc...) asparagine). 5 consecutive transmembrane segments (helical) span residues 1599-1619 (LLYALLIYIIFITIFIVISII), 1662-1682 (YAQLIINLFLYNAIFVLVYSL), 1704-1724 (STSVACSIVTYYLTICMVNLF), 1763-1783 (GLVFMLQAGMGIPIIILILSF), and 1796-1816 (FASFVIDNILDIIILISFCFI). N-linked (GlcNAc...) asparagine glycosylation occurs at asparagine 1867.

The protein localises to the membrane. Functionally, required for mucocyst secretion. The sequence is that of Cysteine repeat modular protein 2 from Tetrahymena thermophila (strain SB210).